Reading from the N-terminus, the 333-residue chain is Fructose-1,6-bisphosphatase class 1 1 (333 aa).

Mg(2+) contacts are provided by Glu81, Asp100, Leu102, and Asp103. Substrate contacts are provided by residues Asp103 to Ser106 and Asn191. Glu263 lines the Mg(2+) pocket.

The protein belongs to the FBPase class 1 family. As to quaternary structure, homotetramer. Requires Mg(2+) as cofactor.

Its subcellular location is the cytoplasm. It carries out the reaction beta-D-fructose 1,6-bisphosphate + H2O = beta-D-fructose 6-phosphate + phosphate. Its pathway is carbohydrate biosynthesis; Calvin cycle. The sequence is that of Fructose-1,6-bisphosphatase class 1 1 from Cereibacter sphaeroides (strain ATCC 17023 / DSM 158 / JCM 6121 / CCUG 31486 / LMG 2827 / NBRC 12203 / NCIMB 8253 / ATH 2.4.1.) (Rhodobacter sphaeroides).